A 71-amino-acid chain; its full sequence is Protein PSY2 (71 aa).

An N-terminal signal peptide occupies residues 1–20 (MSFGTRLLLFLILTLPLVTS). Residues 21 to 46 (SSPNTLHVSGIVKTGTTSRFLMMTIE) constitute a propeptide that is removed on maturation. Y48 bears the Sulfotyrosine mark. Residues 50-71 (DPSANTRHDPSVPTNAKADTTP) are disordered. Residues 61–71 (VPTNAKADTTP) are compositionally biased toward polar residues. Position 62 is a 4-hydroxyproline (P62). O-linked (Ara...) hydroxyproline glycosylation occurs at P62. Residues 65 to 71 (AKADTTP) constitute a propeptide that is removed on maturation.

It belongs to the sulfated-peptide plant hormone family. In terms of processing, the sulfation and the glycosylation are required for full activity.

Its subcellular location is the secreted. Promotes cellular proliferation and expansion. This is Protein PSY2 (PSY2) from Arabidopsis thaliana (Mouse-ear cress).